A 315-amino-acid chain; its full sequence is Acetaldehyde dehydrogenase (315 aa).

NAD(+) is bound at residue 13–16 (SGNI). C143 (acyl-thioester intermediate) is an active-site residue. NAD(+)-binding positions include 174–182 (SAGPGTRKN) and N285.

This sequence belongs to the acetaldehyde dehydrogenase family.

It catalyses the reaction acetaldehyde + NAD(+) + CoA = acetyl-CoA + NADH + H(+). This Shewanella woodyi (strain ATCC 51908 / MS32) protein is Acetaldehyde dehydrogenase.